Consider the following 272-residue polypeptide: Methyl-CpG-binding domain-containing protein 2 (272 aa).

Polar residues predominate over residues 1-15 (MSMSQSRAVQRSSSP). The segment at 1–24 (MSMSQSRAVQRSSSPNEDRGENQL) is disordered. Residues 53–112 (CPSIGAFTVQCASCFKWRLMPSMQKYEEIREQLLENPFFCDTAREWKPDISCDVPADIYQ) form a CW-type zinc finger. Positions 62 to 104 (QCASCFKWRLMPSMQKYEEIREQLLENPFFCDTAREWKPDISC) match the MBD-associated domain (MAD) motif. The Zn(2+) site is built by Cys63, Cys66, Cys92, and Cys104. Positions 118–192 (WAIDKPNISR…SQFSFQIPKP (75 aa)) constitute an MBD domain. Positions 236 to 250 (LGTPTESGLNNSHYQ) are enriched in polar residues. A disordered region spans residues 236–272 (LGTPTESGLNNSHYQPSKKKKTSTLSIFGSNDELADR).

Interacts (via MBD domain) with DDM1. Expressed in buds, flowers, stems, siliques and mature seeds.

It is found in the nucleus. Its function is as follows. Probable transcriptional regulator. This is Methyl-CpG-binding domain-containing protein 2 (MBD2) from Arabidopsis thaliana (Mouse-ear cress).